The following is a 385-amino-acid chain: Alkanesulfonate monooxygenase (385 aa).

Belongs to the SsuD family.

It catalyses the reaction an alkanesulfonate + FMNH2 + O2 = an aldehyde + FMN + sulfite + H2O + 2 H(+). Catalyzes the desulfonation of aliphatic sulfonates. The sequence is that of Alkanesulfonate monooxygenase from Burkholderia pseudomallei (strain 1710b).